The following is a 324-amino-acid chain: Ribose-phosphate pyrophosphokinase (324 aa).

Residues 45 to 47 (NGE) and 104 to 105 (RQ) each bind ATP. Mg(2+) is bound by residues His-138 and Asp-178. Residue Lys-201 is part of the active site. Residues Arg-203, Asp-229, and 233–237 (DTGGT) each bind D-ribose 5-phosphate.

The protein belongs to the ribose-phosphate pyrophosphokinase family. Class I subfamily. In terms of assembly, homohexamer. Mg(2+) serves as cofactor.

The protein localises to the cytoplasm. It catalyses the reaction D-ribose 5-phosphate + ATP = 5-phospho-alpha-D-ribose 1-diphosphate + AMP + H(+). It functions in the pathway metabolic intermediate biosynthesis; 5-phospho-alpha-D-ribose 1-diphosphate biosynthesis; 5-phospho-alpha-D-ribose 1-diphosphate from D-ribose 5-phosphate (route I): step 1/1. Functionally, involved in the biosynthesis of the central metabolite phospho-alpha-D-ribosyl-1-pyrophosphate (PRPP) via the transfer of pyrophosphoryl group from ATP to 1-hydroxyl of ribose-5-phosphate (Rib-5-P). In Streptomyces avermitilis (strain ATCC 31267 / DSM 46492 / JCM 5070 / NBRC 14893 / NCIMB 12804 / NRRL 8165 / MA-4680), this protein is Ribose-phosphate pyrophosphokinase.